A 277-amino-acid chain; its full sequence is 4-hydroxy-3-methylbut-2-enyl diphosphate reductase (277 aa).

Cysteine 12 serves as a coordination point for [4Fe-4S] cluster. 2 residues coordinate (2E)-4-hydroxy-3-methylbut-2-enyl diphosphate: histidine 36 and histidine 70. Histidine 36 and histidine 70 together coordinate dimethylallyl diphosphate. Residues histidine 36 and histidine 70 each contribute to the isopentenyl diphosphate site. Cysteine 92 is a binding site for [4Fe-4S] cluster. A (2E)-4-hydroxy-3-methylbut-2-enyl diphosphate-binding site is contributed by histidine 120. Histidine 120 contacts dimethylallyl diphosphate. Histidine 120 is an isopentenyl diphosphate binding site. Glutamate 122 serves as the catalytic Proton donor. Threonine 160 lines the (2E)-4-hydroxy-3-methylbut-2-enyl diphosphate pocket. Cysteine 188 provides a ligand contact to [4Fe-4S] cluster. (2E)-4-hydroxy-3-methylbut-2-enyl diphosphate-binding residues include serine 216, serine 217, asparagine 218, and serine 260. 4 residues coordinate dimethylallyl diphosphate: serine 216, serine 217, asparagine 218, and serine 260. Positions 216, 217, 218, and 260 each coordinate isopentenyl diphosphate.

It belongs to the IspH family. [4Fe-4S] cluster serves as cofactor.

The catalysed reaction is isopentenyl diphosphate + 2 oxidized [2Fe-2S]-[ferredoxin] + H2O = (2E)-4-hydroxy-3-methylbut-2-enyl diphosphate + 2 reduced [2Fe-2S]-[ferredoxin] + 2 H(+). The enzyme catalyses dimethylallyl diphosphate + 2 oxidized [2Fe-2S]-[ferredoxin] + H2O = (2E)-4-hydroxy-3-methylbut-2-enyl diphosphate + 2 reduced [2Fe-2S]-[ferredoxin] + 2 H(+). The protein operates within isoprenoid biosynthesis; dimethylallyl diphosphate biosynthesis; dimethylallyl diphosphate from (2E)-4-hydroxy-3-methylbutenyl diphosphate: step 1/1. It participates in isoprenoid biosynthesis; isopentenyl diphosphate biosynthesis via DXP pathway; isopentenyl diphosphate from 1-deoxy-D-xylulose 5-phosphate: step 6/6. Its function is as follows. Catalyzes the conversion of 1-hydroxy-2-methyl-2-(E)-butenyl 4-diphosphate (HMBPP) into a mixture of isopentenyl diphosphate (IPP) and dimethylallyl diphosphate (DMAPP). Acts in the terminal step of the DOXP/MEP pathway for isoprenoid precursor biosynthesis. The sequence is that of 4-hydroxy-3-methylbut-2-enyl diphosphate reductase from Sulfurovum sp. (strain NBC37-1).